A 67-amino-acid chain; its full sequence is MPDFSNSNLNSFIACLRSLSIKILIICHGFIVFSSLAEVPSRLTNFFSIMILLTFSNFSRTLGLEFI.

2 consecutive transmembrane segments (helical) span residues 13–32 (IACLRSLSIKILIICHGFIV) and 42–64 (RLTNFFSIMILLTFSNFSRTLGL).

Its subcellular location is the membrane. This is an uncharacterized protein from Saccharomyces cerevisiae (strain ATCC 204508 / S288c) (Baker's yeast).